Consider the following 208-residue polypeptide: Inner membrane-spanning protein YciB (208 aa).

The next 5 membrane-spanning stretches (helical) occupy residues Ala49–Leu69, Thr78–His98, Trp105–Phe125, Phe150–Phe170, and Phe178–Leu198.

The protein belongs to the YciB family.

The protein localises to the cell inner membrane. Functionally, plays a role in cell envelope biogenesis, maintenance of cell envelope integrity and membrane homeostasis. The chain is Inner membrane-spanning protein YciB from Polaromonas naphthalenivorans (strain CJ2).